A 226-amino-acid chain; its full sequence is Cytidylate kinase (226 aa).

10–18 (GPASSGKST) contacts ATP.

This sequence belongs to the cytidylate kinase family. Type 1 subfamily.

It is found in the cytoplasm. The enzyme catalyses CMP + ATP = CDP + ADP. The catalysed reaction is dCMP + ATP = dCDP + ADP. This chain is Cytidylate kinase, found in Streptococcus pyogenes serotype M4 (strain MGAS10750).